Consider the following 667-residue polypeptide: Serine/threonine-protein kinase BUR1 (667 aa).

The Protein kinase domain occupies 60–378 (YKEEEKLGQG…AMSAMKHPFF (319 aa)). Residues 66–74 (LGQGTFGEV) and Lys-89 each bind ATP. Asp-207 acts as the Proton acceptor in catalysis. The disordered stretch occupies residues 408–667 (HEAMSQKGPS…SEQKDIADLY (260 aa)). The segment covering 432–443 (KFEKKSGIKREQ) has biased composition (basic and acidic residues). Polar residues predominate over residues 494 to 516 (NNHSGSLRNRITPSNMGTHSNPR). Over residues 541–556 (YNRGYSSSVNSRYNNR) the composition is skewed to low complexity. Composition is skewed to polar residues over residues 582-594 (DNNQ…QGHS), 602-611 (SKYNSTQTNI), and 622-632 (NEYNASKLGSQ). Residues 633–667 (DTKKNDYPKHSETQKQQNNEEKKIHSEQKDIADLY) show a composition bias toward basic and acidic residues.

Belongs to the protein kinase superfamily. CMGC Ser/Thr protein kinase family. CDC2/CDKX subfamily.

The protein resides in the nucleus. It catalyses the reaction L-seryl-[protein] + ATP = O-phospho-L-seryl-[protein] + ADP + H(+). The enzyme catalyses L-threonyl-[protein] + ATP = O-phospho-L-threonyl-[protein] + ADP + H(+). It carries out the reaction [DNA-directed RNA polymerase] + ATP = phospho-[DNA-directed RNA polymerase] + ADP + H(+). Its function is as follows. Serine/threonine-protein kinase involved in transcription regulation. Phosphorylates the UBC2/RAD6 ubiquitin-conjugating enzyme (E2), leading to monoubiquitination of histone H2B and the silencing of telomeric-associated genes. Also required for histone H3 methylation. Necessary for the recovery from pheromone-induced growth arrest in the cell cycle G1 phase. This is Serine/threonine-protein kinase BUR1 (BUR1) from Candida glabrata (strain ATCC 2001 / BCRC 20586 / JCM 3761 / NBRC 0622 / NRRL Y-65 / CBS 138) (Yeast).